The following is a 328-amino-acid chain: tRNA uridine(34) hydroxylase (328 aa).

The Rhodanese domain occupies 130–224; that stretch reads LDKDTVVLDT…YGKDPEVQGE (95 aa). Cysteine 184 acts as the Cysteine persulfide intermediate in catalysis.

Belongs to the TrhO family.

It catalyses the reaction uridine(34) in tRNA + AH2 + O2 = 5-hydroxyuridine(34) in tRNA + A + H2O. Catalyzes oxygen-dependent 5-hydroxyuridine (ho5U) modification at position 34 in tRNAs. This is tRNA uridine(34) hydroxylase from Streptococcus pneumoniae (strain P1031).